A 427-amino-acid polypeptide reads, in one-letter code: Histidine--tRNA ligase (427 aa).

The protein belongs to the class-II aminoacyl-tRNA synthetase family. Homodimer.

It is found in the cytoplasm. It carries out the reaction tRNA(His) + L-histidine + ATP = L-histidyl-tRNA(His) + AMP + diphosphate + H(+). The polypeptide is Histidine--tRNA ligase (Corynebacterium urealyticum (strain ATCC 43042 / DSM 7109)).